Reading from the N-terminus, the 304-residue chain is Porphobilinogen deaminase (304 aa).

Position 240 is an S-(dipyrrolylmethanemethyl)cysteine (cysteine 240).

The protein belongs to the HMBS family. Monomer. Requires dipyrromethane as cofactor.

The catalysed reaction is 4 porphobilinogen + H2O = hydroxymethylbilane + 4 NH4(+). It participates in porphyrin-containing compound metabolism; protoporphyrin-IX biosynthesis; coproporphyrinogen-III from 5-aminolevulinate: step 2/4. Functionally, tetrapolymerization of the monopyrrole PBG into the hydroxymethylbilane pre-uroporphyrinogen in several discrete steps. This Xanthomonas campestris pv. campestris (strain B100) protein is Porphobilinogen deaminase.